Consider the following 141-residue polypeptide: Nucleoside triphosphatase NudI (141 aa).

The 141-residue stretch at 1–141 folds into the Nudix hydrolase domain; that stretch reads MRQRTIVCPL…RKTLRLKGLL (141 aa). Residues 38–59 carry the Nudix box motif; that stretch reads GGVEPGERIEEALRREIREELG.

Belongs to the Nudix hydrolase family. NudI subfamily. Monomer. Mg(2+) is required as a cofactor.

It catalyses the reaction a ribonucleoside 5'-triphosphate + H2O = a ribonucleoside 5'-phosphate + diphosphate + H(+). The catalysed reaction is a 2'-deoxyribonucleoside 5'-triphosphate + H2O = a 2'-deoxyribonucleoside 5'-phosphate + diphosphate + H(+). The enzyme catalyses dUTP + H2O = dUMP + diphosphate + H(+). It carries out the reaction dTTP + H2O = dTMP + diphosphate + H(+). It catalyses the reaction dCTP + H2O = dCMP + diphosphate + H(+). Catalyzes the hydrolysis of nucleoside triphosphates, with a preference for pyrimidine deoxynucleoside triphosphates (dUTP, dTTP and dCTP). The polypeptide is Nucleoside triphosphatase NudI (Escherichia coli O17:K52:H18 (strain UMN026 / ExPEC)).